Consider the following 737-residue polypeptide: Procollagen-lysine,2-oxoglutarate 5-dioxygenase 2 (737 aa).

Positions 1–25 (MGGCTVKPQLLLLALVLHPWNPCLG) are cleaved as a signal peptide. Asparagine 63, asparagine 209, and asparagine 297 each carry an N-linked (GlcNAc...) asparagine glycan. Threonine 320 bears the Phosphothreonine mark. At tyrosine 323 the chain carries Phosphotyrosine. Asparagine 365 and asparagine 522 each carry an N-linked (GlcNAc...) asparagine glycan. One can recognise a Fe2OG dioxygenase domain in the interval 644-737 (KGFALLNFVV…RYIAVSFIDP (94 aa)). Fe cation contacts are provided by histidine 666 and aspartate 668. Asparagine 696 carries N-linked (GlcNAc...) asparagine glycosylation. At lysine 704 the chain carries N6-succinyllysine. Histidine 718 provides a ligand contact to Fe cation. Asparagine 725 is a glycosylation site (N-linked (GlcNAc...) asparagine). The active site involves arginine 728.

As to quaternary structure, homodimer. The cofactor is Fe(2+). L-ascorbate is required as a cofactor. Highly expressed in pancreas and muscle. Isoform 1 and isoform 2 are expressed in the majority of the examined cell types. Isoform 2 is specifically expressed in skin, lung, dura and aorta.

Its subcellular location is the rough endoplasmic reticulum membrane. The catalysed reaction is L-lysyl-[collagen] + 2-oxoglutarate + O2 = (5R)-5-hydroxy-L-lysyl-[collagen] + succinate + CO2. In terms of biological role, forms hydroxylysine residues in -Xaa-Lys-Gly- sequences in collagens. These hydroxylysines serve as sites of attachment for carbohydrate units and are essential for the stability of the intermolecular collagen cross-links. The polypeptide is Procollagen-lysine,2-oxoglutarate 5-dioxygenase 2 (Homo sapiens (Human)).